The sequence spans 375 residues: N5-carboxyaminoimidazole ribonucleotide synthase (375 aa).

Residues arginine 108, lysine 148, 153 to 159, 183 to 186, glutamate 191, histidine 214, and 266 to 267 each bind ATP; these read GYDGKGQ, EQYL, and NE. Positions 112-296 constitute an ATP-grasp domain; the sequence is KQTLLEANTQ…QFDTHILAIT (185 aa).

Belongs to the PurK/PurT family. In terms of assembly, homodimer.

It carries out the reaction 5-amino-1-(5-phospho-beta-D-ribosyl)imidazole + hydrogencarbonate + ATP = 5-carboxyamino-1-(5-phospho-D-ribosyl)imidazole + ADP + phosphate + 2 H(+). The protein operates within purine metabolism; IMP biosynthesis via de novo pathway; 5-amino-1-(5-phospho-D-ribosyl)imidazole-4-carboxylate from 5-amino-1-(5-phospho-D-ribosyl)imidazole (N5-CAIR route): step 1/2. Its function is as follows. Catalyzes the ATP-dependent conversion of 5-aminoimidazole ribonucleotide (AIR) and HCO(3)(-) to N5-carboxyaminoimidazole ribonucleotide (N5-CAIR). In Staphylococcus epidermidis (strain ATCC 12228 / FDA PCI 1200), this protein is N5-carboxyaminoimidazole ribonucleotide synthase.